The chain runs to 765 residues: MLVSHVFLLTLSLSVPSLGQYEHWPYYPEYQGPPEPPPTQPKIVPQIHVRLAGEKRKHNEGRVEVYYEGEWGTVCDDDFSMYAAHIVCRELGYQEAVSWSPSSKYGKGEGRIWLDNVNCNGRERSIASCSSNGWGVTDCKHSEDVGVQCSDRRIPGFKVSNELPGHLEGLNIQVEDVRIRPILSAYRKRVPVTEGFAEVKVQGSWRQVCNTQWSSKNSRVVCGMFGFPSEKKYNTKVYKMFSSRRKHTYWQFSANCTGNEPHLSSCKVGGVLSPDPKTNQTCSDGAPAVVSCTPGRAFAPSPGTGFRKAFRQEQPLVRLRGGANVGEGRVEVLKNGEWGTVCDDKWNLVTASVICRELGFGSAKEALVGAQLGQGMGQIHMSEIQCNGFEKSLTDCKFNIHSQGCNHEEDAAVRCNVPAMGFENQVRLSGGRHPTEGRVEVLMERNGTLRWGTVCSETWGTMEAMIVCRQLGLGFASHAFQETWYWQGDINADDVVMSGVKCSGTEMSLAHCRHDGANVNCPRGGGRFAAGVSCVETAPDLVLNAALVEQTTYLEDRPMFMLQCAHEEQCLASSADRTSPTTGYRRLLRFSSQIHNNGQADFRPKTGRHAWIWHDCHRHYHSMEVFTHYDLLTLNGTKVAEGHKASFCLEDSECEADIQKQYVCANFGEQGITVGCWDLYRHDIDCQWVDITDVAPGDYFFQIIINPNQEVAESDYTNNIMKCRCRYDGQRIWMYNCHIGGSYSTETEEKFEHFSGLLNNQLSTR.

The first 19 residues, 1-19 (MLVSHVFLLTLSLSVPSLG), serve as a signal peptide directing secretion. 4 SRCR domains span residues 49–150 (VRLA…VQCS), 179–293 (IRPI…VSCT), 317–416 (VRLR…VRCN), and 426–535 (VRLS…VSCV). 9 cysteine pairs are disulfide-bonded: Cys75–Cys139, Cys88–Cys149, Cys119–Cys129, Cys209–Cys282, Cys222–Cys292, Cys256–Cys266, Cys342–Cys405, Cys355–Cys415, and Cys386–Cys396. Asn279 is a glycosylation site (N-linked (GlcNAc...) asparagine). N-linked (GlcNAc...) asparagine glycosylation occurs at Asn446. 3 cysteine pairs are disulfide-bonded: Cys455/Cys521, Cys468/Cys534, and Cys502/Cys512. Residues 539–742 (PDLVLNAALV…WMYNCHIGGS (204 aa)) form a lysyl-oxidase like region. Residues Asp540 and Leu541 each coordinate Ca(2+). Cystine bridges form between Cys564-Cys616, Cys570-Cys686, Cys648-Cys664, and Cys654-Cys676. Positions 617, 619, and 621 each coordinate Cu cation. N-linked (GlcNAc...) asparagine glycosylation occurs at Asn635. Residues 644–680 (KASFCLEDSECEADIQKQYVCANFGEQGITVGCWDLY) constitute a cross-link (lysine tyrosylquinone (Lys-Tyr)). The residue at position 680 (Tyr680) is a 2',4',5'-topaquinone. Ca(2+) contacts are provided by Glu713, Asp715, Asn718, and Asn719. The cysteines at positions 723 and 737 are disulfide-linked.

Belongs to the lysyl oxidase family. The cofactor is Cu cation. Lysine tyrosylquinone residue serves as cofactor. Post-translationally, the lysine tyrosylquinone cross-link (LTQ) is generated by condensation of the epsilon-amino group of a lysine with a topaquinone produced by oxidation of tyrosine.

It localises to the secreted. It is found in the extracellular space. Its subcellular location is the extracellular matrix. The protein resides in the basement membrane. The protein localises to the nucleus. It localises to the chromosome. It is found in the endoplasmic reticulum. The enzyme catalyses L-lysyl-[protein] + O2 + H2O = (S)-2-amino-6-oxohexanoyl-[protein] + H2O2 + NH4(+). Functionally, mediates the post-translational oxidative deamination of lysine residues on target proteins leading to the formation of deaminated lysine (allysine). Acts as a transcription corepressor and specifically mediates deamination of trimethylated 'Lys-4' of histone H3 (H3K4me3), a specific tag for epigenetic transcriptional activation. Shows no activity against histone H3 when it is trimethylated on 'Lys-9' (H3K9me3) or 'Lys-27' (H3K27me3) or when 'Lys-4' is monomethylated (H3K4me1) or dimethylated (H3K4me2). Also mediates deamination of methylated TAF10, a member of the transcription factor IID (TFIID) complex, which induces release of TAF10 from promoters, leading to inhibition of TFIID-dependent transcription. LOXL2-mediated deamination of TAF10 results in transcriptional repression of genes required for embryonic stem cell pluripotency. Involved in epithelial to mesenchymal transition (EMT) and participates in repression of E-cadherin, probably by mediating deamination of histone H3. When secreted into the extracellular matrix, promotes cross-linking of extracellular matrix proteins by mediating oxidative deamination of peptidyl lysine residues in precursors to fibrous collagen and elastin. Acts as a regulator of sprouting angiogenesis, probably via collagen IV scaffolding. Acts as a regulator of chondrocyte differentiation, probably by regulating expression of factors that control chondrocyte differentiation. This chain is Lysyl oxidase homolog 2 (loxl2), found in Xenopus laevis (African clawed frog).